A 206-amino-acid polypeptide reads, in one-letter code: Inner membrane-spanning protein YciB (206 aa).

The next 5 membrane-spanning stretches (helical) occupy residues 50-70 (PILL…GYLL), 78-98 (GTLW…IYFH), 105-125 (WKPT…QIFL), 150-170 (LSWV…AFNF), and 173-193 (AAWV…FIII).

Belongs to the YciB family.

Its subcellular location is the cell inner membrane. Plays a role in cell envelope biogenesis, maintenance of cell envelope integrity and membrane homeostasis. The polypeptide is Inner membrane-spanning protein YciB (Herminiimonas arsenicoxydans).